A 264-amino-acid chain; its full sequence is MRQPTVAGKFYPLSTKALRKEIVKCFHGLEIMSEDVIGAVVPHAGYVYSGPVAAHAFARLPKADTYVIFGPNHTGYGSPVAMSQDVWNTPFGDVETDRELGKLLAGTIIDMDEVAHRYEHSVEVQIPFLQYLFGSDFKVLPICMGMQDEDTAVEVGLEVARAVKESGKKVVFIASSDLSHYVPQEKAEKSDNYLIDAILDMDVPEIYRRKYEKDITACGYGPITAMLTAAKECGAKNTELVKYGTSGDVTGDPMVVGYAAIIVK.

The protein belongs to the MEMO1 family.

This is MEMO1 family protein Mbur_2394 from Methanococcoides burtonii (strain DSM 6242 / NBRC 107633 / OCM 468 / ACE-M).